A 935-amino-acid polypeptide reads, in one-letter code: MSDYKDTLNLPKTSFSMKGNLANKEPMILNKWEKQGIYKKIREHFAGREKFVLHDGPPYANGSIHVGHAVNKILKDIIIKSKTLSGYDAPFTPTWDCHGLPIELQVEKKHGKAGQSISEDDFRKECRKYAKKQVEIQKKDFKRLGVLGDWEQPYLTINFDYEANMIRTLAKIIENGHLSKGFKPVHWCTDCGSALAEAEVEYADKVSPAIDVKFKIKDKDKLAQAFGLDSLNHDAFAIIWTTTPWTLPANQAIAVNNQLNYSLIKIEDFYIILAENLVEQTLKRYAIENAQIIATTTGNKLTGIIAEHPFYSRHVPILHGDHVTDDSGTGLVHTAPTHGVDDFTLGKEHNLSMEIFVKGNGCYSENTKLFAGEFIFKANDRIIELLGEKKRLMNSDKIKHSYPHCWRHKTPLMFRATPQWFISMEKQGLRDKALQAIKETSWAPSWGQARIEGMVKDRPDWCISRQRTWGVPLPLFIHKETEELHPNTIEILHKVAEKIEKDGIEAWFNADDCEFITETAQYKSVKDTLDVWFDSGSSSMCILDLDKRLSYPADLYLEGSDQHRGWFQTSLLVAMSAKGSQPYKEVFTHGFVVDEHGRKMSKSLGNVTSPQDIYNTLGADILRLWTASTDYKSEMAVSDQILKRTADTYRRLRNTARFLLSNLDGFNPVTDIIEFDKLVKLDQWAIAKTKEFQDKIIEAYDKYQTHTVAQLIHHFCSIEMGSFYLDIIKDRQYTAKTDGHPRKSAQTAIYHIVHALVRWMAPILSFTANEIWDATPKTTDLPIQLCEWYTGLKSFDQDAELDLEYWAKIQEIRSEVNRVLEIKRNEDVIKASLEAEITIYADKYNYKLLEKLGNELRFLLISSKADLKVIEESTSSSIAANIPGLLIEITKIEEPKCERCWHRSSTVGDNPQYKDICSRCVENITTEAGESREFA.

The 'HIGH' region signature appears at 58-68 (PYANGSIHVGH). Residue Glu558 participates in L-isoleucyl-5'-AMP binding. The 'KMSKS' region signature appears at 599-603 (KMSKS). Lys602 is an ATP binding site. Zn(2+) contacts are provided by Cys897, Cys900, Cys917, and Cys920.

This sequence belongs to the class-I aminoacyl-tRNA synthetase family. IleS type 1 subfamily. In terms of assembly, monomer. Zn(2+) serves as cofactor.

The protein resides in the cytoplasm. It catalyses the reaction tRNA(Ile) + L-isoleucine + ATP = L-isoleucyl-tRNA(Ile) + AMP + diphosphate. Catalyzes the attachment of isoleucine to tRNA(Ile). As IleRS can inadvertently accommodate and process structurally similar amino acids such as valine, to avoid such errors it has two additional distinct tRNA(Ile)-dependent editing activities. One activity is designated as 'pretransfer' editing and involves the hydrolysis of activated Val-AMP. The other activity is designated 'posttransfer' editing and involves deacylation of mischarged Val-tRNA(Ile). In Francisella tularensis subsp. tularensis (strain WY96-3418), this protein is Isoleucine--tRNA ligase.